The sequence spans 367 residues: Epoxide hydrolase 3 (367 aa).

A helical membrane pass occupies residues 21–41; sequence GVFFWVLVYVAALLAAVSYIP. Asp173 serves as the catalytic Nucleophile. The active-site Proton donor is Tyr285. The active-site Proton acceptor is the His340.

It belongs to the AB hydrolase superfamily. Epoxide hydrolase family.

The protein resides in the microsome membrane. It catalyses the reaction an epoxide + H2O = an ethanediol. The enzyme catalyses 9,10-epoxyoctadecanoate + H2O = 9,10-dihydroxyoctadecanoate. It carries out the reaction 9,10-epoxy-(12Z)-octadecenoate + H2O = 9,10-dihydroxy-(12Z)-octadecenoate. The catalysed reaction is 8,9-epoxy-(5Z,11Z,14Z)-eicosatrienoate + H2O = 8,9-dihydroxy-(5Z,11Z,14Z)-eicosatrienoate. It catalyses the reaction 11,12-epoxy-(5Z,8Z,14Z)-eicosatrienoate + H2O = 11,12-dihydroxy-(5Z,8Z,14Z)-eicosatrienoate. The enzyme catalyses 14,15-epoxy-(5Z,8Z,11Z)-eicosatrienoate + H2O = 14,15-dihydroxy-(5Z,8Z,11Z)-eicosatrienoate. Inhibited by 1-(1-acetylpiperidin-4-yl)-3-(4-(trifl uoromethoxy)phenyl)urea (TPAU), 1-cyclohexyl-3-dodecylurea (CDU), 12-(3-adamantan-1-yl-ureido)-dodecanoic acid (AUDA), 1-((3S, 5S, 7S)-adamantan-1-yl)-3-(5-(2-(2-ethoxyethoxy) ethoxy)pentyl)urea (AEPU) and to a lesser extent by 8-(3-((3S, 5S, 7S)-adamantan-1-yl)ureido) octanoic acid (AUOA). Its function is as follows. Catalyzes the hydrolysis of epoxide-containing fatty acids. Active in vitro against epoxyeicosatrienoic acids (EETs) including 8,9-EET, 9,10-EET, 11,12-EET and 14,15-EET and leukotoxin. This Xenopus tropicalis (Western clawed frog) protein is Epoxide hydrolase 3 (ephx3).